The following is a 512-amino-acid chain: Probable metalloreductase AIM14 (512 aa).

The next 7 membrane-spanning stretches (helical) occupy residues 20–40, 61–81, 97–117, 132–152, 161–181, 191–211, and 218–235; these read IKYG…ILIC, PLFI…VFHV, MSYA…SIGL, VIIA…ILEG, LWNF…IISL, YFYV…CLHA, and YAIA…ERYA. Positions 94–206 constitute a Ferric oxidoreductase domain; the sequence is FGRMSYALLP…NITVWLFVGL (113 aa). The FAD-binding FR-type domain occupies 230–355; the sequence is IFERYAKSHS…GGSGISFALP (126 aa). Residues 427–436 are compositionally biased toward low complexity; it reads ESLPSSETPS. The disordered stretch occupies residues 427-451; that stretch reads ESLPSSETPSRTVNDDSLSQDTRPK. Residues 437–447 are compositionally biased toward polar residues; it reads RTVNDDSLSQD.

It belongs to the ferric reductase (FRE) family. AIM14 subfamily.

Its subcellular location is the membrane. In terms of biological role, probable cell surface metalloreductase. May be involved in iron or copper homeostasis. In Debaryomyces hansenii (strain ATCC 36239 / CBS 767 / BCRC 21394 / JCM 1990 / NBRC 0083 / IGC 2968) (Yeast), this protein is Probable metalloreductase AIM14 (AIM14).